A 217-amino-acid polypeptide reads, in one-letter code: Large ribosomal subunit protein uL1 (217 aa).

At Tyr-11 the chain carries Phosphotyrosine. Lys-91 and Lys-106 each carry N6-acetyllysine. Lys-118 is subject to N6-acetyllysine; alternate. Lys-118 is covalently cross-linked (Glycyl lysine isopeptide (Lys-Gly) (interchain with G-Cter in SUMO1); alternate). A Glycyl lysine isopeptide (Lys-Gly) (interchain with G-Cter in SUMO2); alternate cross-link involves residue Lys-118. Lys-161 is covalently cross-linked (Glycyl lysine isopeptide (Lys-Gly) (interchain with G-Cter in SUMO2)).

This sequence belongs to the universal ribosomal protein uL1 family. In terms of assembly, component of the large ribosomal subunit.

It localises to the cytoplasm. In terms of biological role, component of the large ribosomal subunit. The ribosome is a large ribonucleoprotein complex responsible for the synthesis of proteins in the cell. The protein is Large ribosomal subunit protein uL1 (RPL10A) of Oryctolagus cuniculus (Rabbit).